The following is a 323-amino-acid chain: Ferrochelatase (323 aa).

The Fe cation site is built by H195 and E276.

This sequence belongs to the ferrochelatase family.

The protein localises to the cytoplasm. It catalyses the reaction heme b + 2 H(+) = protoporphyrin IX + Fe(2+). The protein operates within porphyrin-containing compound metabolism; protoheme biosynthesis; protoheme from protoporphyrin-IX: step 1/1. Functionally, catalyzes the ferrous insertion into protoporphyrin IX. This Mannheimia succiniciproducens (strain KCTC 0769BP / MBEL55E) protein is Ferrochelatase.